The sequence spans 80 residues: Exodeoxyribonuclease 7 small subunit (80 aa).

The protein belongs to the XseB family. In terms of assembly, heterooligomer composed of large and small subunits.

The protein localises to the cytoplasm. It catalyses the reaction Exonucleolytic cleavage in either 5'- to 3'- or 3'- to 5'-direction to yield nucleoside 5'-phosphates.. Bidirectionally degrades single-stranded DNA into large acid-insoluble oligonucleotides, which are then degraded further into small acid-soluble oligonucleotides. This chain is Exodeoxyribonuclease 7 small subunit, found in Rickettsia bellii (strain OSU 85-389).